A 269-amino-acid polypeptide reads, in one-letter code: S-adenosylmethionine decarboxylase proenzyme (269 aa).

Serine 118 (schiff-base intermediate with substrate; via pyruvic acid) is an active-site residue. Residue serine 118 is modified to Pyruvic acid (Ser); by autocatalysis. Histidine 123 serves as the catalytic Proton acceptor; for processing activity. The Proton donor; for catalytic activity role is filled by cysteine 146.

The protein belongs to the prokaryotic AdoMetDC family. Type 2 subfamily. In terms of assembly, heterooctamer of four alpha and four beta chains arranged as a tetramer of alpha/beta heterodimers. The cofactor is pyruvate. In terms of processing, is synthesized initially as an inactive proenzyme. Formation of the active enzyme involves a self-maturation process in which the active site pyruvoyl group is generated from an internal serine residue via an autocatalytic post-translational modification. Two non-identical subunits are generated from the proenzyme in this reaction, and the pyruvate is formed at the N-terminus of the alpha chain, which is derived from the carboxyl end of the proenzyme. The post-translation cleavage follows an unusual pathway, termed non-hydrolytic serinolysis, in which the side chain hydroxyl group of the serine supplies its oxygen atom to form the C-terminus of the beta chain, while the remainder of the serine residue undergoes an oxidative deamination to produce ammonia and the pyruvoyl group blocking the N-terminus of the alpha chain.

The catalysed reaction is S-adenosyl-L-methionine + H(+) = S-adenosyl 3-(methylsulfanyl)propylamine + CO2. It functions in the pathway amine and polyamine biosynthesis; S-adenosylmethioninamine biosynthesis; S-adenosylmethioninamine from S-adenosyl-L-methionine: step 1/1. Catalyzes the decarboxylation of S-adenosylmethionine to S-adenosylmethioninamine (dcAdoMet), the propylamine donor required for the synthesis of the polyamines spermine and spermidine from the diamine putrescine. The protein is S-adenosylmethionine decarboxylase proenzyme of Brevibacillus brevis (strain 47 / JCM 6285 / NBRC 100599).